The chain runs to 312 residues: Protein dif-1 (312 aa).

Solcar repeat units lie at residues 2-93, 102-193, and 203-289; these read SDVL…GKWL, MTFI…LKKK, and LSPG…TLAA. Helical transmembrane passes span 5 to 25, 69 to 89, 104 to 124, 172 to 192, 209 to 229, and 261 to 282; these read LLNF…GHPF, MAAP…GCAV, FIQN…VMVP, TLLR…YLKK, LMAG…ADVL, and LFKG…CFFG.

This sequence belongs to the mitochondrial carrier (TC 2.A.29) family.

It is found in the mitochondrion inner membrane. Functionally, seems to play a role in the maintenance of tissue differentiation in the developing embryo, but not for its initiation. The chain is Protein dif-1 (dif-1) from Caenorhabditis elegans.